Reading from the N-terminus, the 414-residue chain is NADH-ubiquinone oxidoreductase chain 4 (414 aa).

10 consecutive transmembrane segments (helical) span residues 18-38 (LVQLYIVYEASLIPMVIMIGV), 47-67 (IAAFQILIYTLIGSIFMLMSI), 96-116 (IIFIGFFIGFAVKIPIAPLHL), 126-146 (PTAGSVLLAGILLKLGGYGYI), 160-180 (YFPIIGGICLISILYTGIATL), 188-208 (IVAYSSISHMNVIVLGLFSGV), 216-236 (IILMIGHGIVSGGLFLCIGVI), 254-274 (MMPIMAILFFLLVLGNIAFPI), 293-313 (IIIAFFSALSMIITAIYSFWL), and 375-395 (VNIFEFVSIGLMVILMLIVGM).

The protein belongs to the complex I subunit 4 family.

Its subcellular location is the mitochondrion membrane. The enzyme catalyses a ubiquinone + NADH + 5 H(+)(in) = a ubiquinol + NAD(+) + 4 H(+)(out). Its function is as follows. Core subunit of the mitochondrial membrane respiratory chain NADH dehydrogenase (Complex I) that is believed to belong to the minimal assembly required for catalysis. Complex I functions in the transfer of electrons from NADH to the respiratory chain. The immediate electron acceptor for the enzyme is believed to be ubiquinone. This Dictyostelium citrinum (Slime mold) protein is NADH-ubiquinone oxidoreductase chain 4 (nad4).